We begin with the raw amino-acid sequence, 83 residues long: Erabutoxin b (83 aa).

Residues 1 to 21 form the signal peptide; that stretch reads MKTLLLTLVVVTIVCLDLGYT. The segment at 24–38 is loop I; the sequence is CFNHQSSQPQTTKTC. 4 cysteine pairs are disulfide-bonded: cysteine 24–cysteine 45, cysteine 38–cysteine 62, cysteine 64–cysteine 75, and cysteine 76–cysteine 81. The tract at residues 39 to 44 is stretch between loop I and loop II; it reads SPGESS. The segment at 45-62 is loop II; it reads CYHKQWSDFRGTIIERGC. Residues 64-75 form a loop III region; that stretch reads CPTVKPGIKLSC.

Belongs to the three-finger toxin family. Short-chain subfamily. Type I alpha-neurotoxin sub-subfamily. As to expression, expressed by the venom gland.

The protein localises to the secreted. In terms of biological role, binds with high affinity to muscular nicotinic acetylcholine receptors (nAChRs) (tested on Torpedo marmorata, Kd=0.07 nM), and with low affinity to neuronal alpha-7/CHRNA7 nAChRs (tested on chimeric alpha-7/CHRNA7, Kd=22 uM) and inhibit acetylcholine from binding to the receptor, thereby impairing neuromuscular transmission. Produces peripheral paralysis by blocking neuromuscular transmission at the postsynaptic site. This is Erabutoxin b from Laticauda semifasciata (Black-banded sea krait).